The primary structure comprises 356 residues: Protein MGF 360-10L (356 aa).

The ANK repeat unit spans residues 58–90 (DLNTALMIAAKENNYQLIKLFTEWGANINYGYI). A glycan (N-linked (GlcNAc...) asparagine; by host) is linked at Asn125. 2 helical membrane-spanning segments follow: residues 206–228 (LNTW…YLYE) and 249–271 (NFLT…LAAI). Asn352 carries an N-linked (GlcNAc...) asparagine; by host glycan.

The protein belongs to the asfivirus MGF 360 family.

It is found in the host membrane. Plays a role in virus cell tropism, and may be required for efficient virus replication in macrophages. The sequence is that of Protein MGF 360-10L from Ornithodoros (relapsing fever ticks).